The sequence spans 166 residues: Ribosome maturation factor RimM (166 aa).

Residues 91–163 (DDGFYDHELE…TCVITPPEGL (73 aa)) form the PRC barrel domain.

This sequence belongs to the RimM family. In terms of assembly, binds ribosomal protein uS19.

The protein resides in the cytoplasm. Functionally, an accessory protein needed during the final step in the assembly of 30S ribosomal subunit, possibly for assembly of the head region. Essential for efficient processing of 16S rRNA. May be needed both before and after RbfA during the maturation of 16S rRNA. It has affinity for free ribosomal 30S subunits but not for 70S ribosomes. This is Ribosome maturation factor RimM from Corynebacterium diphtheriae (strain ATCC 700971 / NCTC 13129 / Biotype gravis).